The following is a 206-amino-acid chain: Protein YmaB (206 aa).

In Bacillus subtilis (strain 168), this protein is Protein YmaB (ymaB).